The chain runs to 211 residues: Large ribosomal subunit protein uL3 (211 aa).

Belongs to the universal ribosomal protein uL3 family. As to quaternary structure, part of the 50S ribosomal subunit. Forms a cluster with proteins L14 and L19.

In terms of biological role, one of the primary rRNA binding proteins, it binds directly near the 3'-end of the 23S rRNA, where it nucleates assembly of the 50S subunit. The sequence is that of Large ribosomal subunit protein uL3 from Akkermansia muciniphila (strain ATCC BAA-835 / DSM 22959 / JCM 33894 / BCRC 81048 / CCUG 64013 / CIP 107961 / Muc).